The following is a 344-amino-acid chain: Arginine N-succinyltransferase (344 aa).

Residue Leu125 participates in succinyl-CoA binding. The active-site Proton donor is the His229.

This sequence belongs to the arginine N-succinyltransferase family.

It catalyses the reaction succinyl-CoA + L-arginine = N(2)-succinyl-L-arginine + CoA + H(+). Its pathway is amino-acid degradation; L-arginine degradation via AST pathway; L-glutamate and succinate from L-arginine: step 1/5. Its function is as follows. Catalyzes the transfer of succinyl-CoA to arginine to produce N(2)-succinylarginine. This chain is Arginine N-succinyltransferase, found in Escherichia coli O17:K52:H18 (strain UMN026 / ExPEC).